Here is a 510-residue protein sequence, read N- to C-terminus: GPI mannosyltransferase 3 (510 aa).

7 helical membrane passes run 17–37 (TVLVVIAAFRVANALTTKTFF), 96–116 (IAPKIVMALFASAGDVYTWKL), 123–143 (PAEAPWALFVSLLSAFNWFFL), 145–163 (RTFSNSAEMVLTAVALNYW), 179–199 (LFIGAISCVLRPTNAILWAVL), 221–241 (VALVFAATYYIDYLYYGEPVF), and 269–289 (YEALPLLTVGWLPLTLWGLWI). Asn-290 is a glycosylation site (N-linked (GlcNAc...) asparagine). The next 2 helical transmembrane spans lie at 316 to 336 (FIYPLVPILHMAAAEAITQTP) and 342 to 362 (WLVWSLALVNILVAGYFSQVH).

Belongs to the glycosyltransferase 22 family. PIGB subfamily.

The protein resides in the endoplasmic reticulum membrane. It participates in glycolipid biosynthesis; glycosylphosphatidylinositol-anchor biosynthesis. Its function is as follows. Mannosyltransferase involved in glycosylphosphatidylinositol-anchor biosynthesis. Transfers the third mannose to Man2-GlcN-acyl-PI during GPI precursor assembly. This is GPI mannosyltransferase 3 (GPI10) from Yarrowia lipolytica (strain CLIB 122 / E 150) (Yeast).